A 172-amino-acid polypeptide reads, in one-letter code: Adenine phosphoribosyltransferase (172 aa).

The protein belongs to the purine/pyrimidine phosphoribosyltransferase family. In terms of assembly, homodimer.

Its subcellular location is the cytoplasm. It carries out the reaction AMP + diphosphate = 5-phospho-alpha-D-ribose 1-diphosphate + adenine. The protein operates within purine metabolism; AMP biosynthesis via salvage pathway; AMP from adenine: step 1/1. Its function is as follows. Catalyzes a salvage reaction resulting in the formation of AMP, that is energically less costly than de novo synthesis. The protein is Adenine phosphoribosyltransferase of Latilactobacillus sakei subsp. sakei (strain 23K) (Lactobacillus sakei subsp. sakei).